Reading from the N-terminus, the 115-residue chain is Large ribosomal subunit protein bL19 (115 aa).

This sequence belongs to the bacterial ribosomal protein bL19 family.

This protein is located at the 30S-50S ribosomal subunit interface and may play a role in the structure and function of the aminoacyl-tRNA binding site. The protein is Large ribosomal subunit protein bL19 of Akkermansia muciniphila (strain ATCC BAA-835 / DSM 22959 / JCM 33894 / BCRC 81048 / CCUG 64013 / CIP 107961 / Muc).